Here is a 108-residue protein sequence, read N- to C-terminus: Phosphoribosyl-AMP cyclohydrolase (108 aa).

Aspartate 73 contacts Mg(2+). Cysteine 74 contacts Zn(2+). Positions 75 and 77 each coordinate Mg(2+). Residues cysteine 90 and cysteine 97 each coordinate Zn(2+).

This sequence belongs to the PRA-CH family. In terms of assembly, homodimer. It depends on Mg(2+) as a cofactor. Zn(2+) is required as a cofactor.

It localises to the cytoplasm. The enzyme catalyses 1-(5-phospho-beta-D-ribosyl)-5'-AMP + H2O = 1-(5-phospho-beta-D-ribosyl)-5-[(5-phospho-beta-D-ribosylamino)methylideneamino]imidazole-4-carboxamide. It participates in amino-acid biosynthesis; L-histidine biosynthesis; L-histidine from 5-phospho-alpha-D-ribose 1-diphosphate: step 3/9. Catalyzes the hydrolysis of the adenine ring of phosphoribosyl-AMP. In Lactiplantibacillus plantarum (strain ATCC BAA-793 / NCIMB 8826 / WCFS1) (Lactobacillus plantarum), this protein is Phosphoribosyl-AMP cyclohydrolase.